The sequence spans 81 residues: Short neurotoxin D (81 aa).

A signal peptide spans 1 to 21 (MKTLLLTLVVVTIVCLDLGYT). 4 cysteine pairs are disulfide-bonded: cysteine 24/cysteine 43, cysteine 38/cysteine 60, cysteine 62/cysteine 73, and cysteine 74/cysteine 79.

It belongs to the three-finger toxin family. Short-chain subfamily. Type I alpha-neurotoxin sub-subfamily. As to expression, expressed by the venom gland.

The protein localises to the secreted. In terms of biological role, binds to muscle nicotinic acetylcholine receptor (nAChR) and inhibit acetylcholine from binding to the receptor, thereby impairing neuromuscular transmission. This is Short neurotoxin D from Aipysurus laevis (Olive sea snake).